Consider the following 88-residue polypeptide: Toxin RelE2 (88 aa).

Belongs to the RelE toxin family.

Its function is as follows. Toxic component of a type II toxin-antitoxin (TA) system. Its toxic effect is neutralized by coexpression with cognate antitoxin RelB2 but no other ParD or RelB antitoxin. The polypeptide is Toxin RelE2 (relE2) (Caulobacter vibrioides (strain ATCC 19089 / CIP 103742 / CB 15) (Caulobacter crescentus)).